Consider the following 802-residue polypeptide: Serine/threonine-protein kinase zyg-8 (802 aa).

Positions 1–13 (MPQTSAWQLNDTT) are enriched in polar residues. Residues 1-102 (MPQTSAWQLN…SAPSTSSAHR (102 aa)) form a disordered region. The span at 15–24 (RPPPPPPPPG) shows a compositional bias: pro residues. The segment covering 89-99 (SPSSSAPSTSS) has biased composition (low complexity). 2 consecutive Doublecortin domains span residues 211-298 (KRLR…VDYS) and 340-423 (RIIK…ADDL). Residues 430-470 (HKSVGSGTSSNMRRTSRRSTMPNRNESLRHDRSGSVIPDQD) are disordered. A compositionally biased stretch (low complexity) spans 434-454 (GSGTSSNMRRTSRRSTMPNRN). The Protein kinase domain occupies 482 to 743 (FQLVRLIGDG…AGELLNDEWM (262 aa)). ATP is bound by residues 488–496 (IGDGNTAVV) and Lys512. Asp604 (proton acceptor) is an active-site residue.

The protein belongs to the protein kinase superfamily. CAMK Ser/Thr protein kinase family. CaMK subfamily. Interacts with tac-1. In terms of tissue distribution, expressed in AFD thermosensory neurons. Expressed in cells near the nerve ring, in motor neurons in the ventral nerve cord and in the six touch receptor neurons including ALML/R, PLML/R and AVM and PVM. Expressed in hypodermal and neural tissues and in the germline.

It localises to the cytoplasm. Its subcellular location is the cytoskeleton. The protein localises to the microtubule organizing center. It is found in the centrosome. The protein resides in the spindle. It carries out the reaction L-seryl-[protein] + ATP = O-phospho-L-seryl-[protein] + ADP + H(+). The enzyme catalyses L-threonyl-[protein] + ATP = O-phospho-L-threonyl-[protein] + ADP + H(+). Its function is as follows. Probable kinase. Kinase activity may be involved in positioning of spindle poles in meiosis and mitosis. Plays a role in spindle positioning during asymmetric division of one-cell stage embryos. Affects spindle position by promoting microtubule assembly during anaphase. Plays a role in the assembly and stability of oocyte spindle, perhaps balancing the forces in the spindle and maintaining their morphology during metaphase. Plays a role in cell division and in embryonic viability up until gastrulation. Required for neuronal morphology and polarity and restricting ectopic process outgrowth; probably as a result of a role in maintaining microtubule integrity. Involved in maintaining neuronal microtubule number, length and packing. May promote axonal and synaptic growth. Plays a role in regulating thermotaxis responses in AFD thermosensory neurons. Required for touch sensitivity in adult touch response receptor neurons. The polypeptide is Serine/threonine-protein kinase zyg-8 (Caenorhabditis elegans).